Here is a 431-residue protein sequence, read N- to C-terminus: Chaperone SurA (431 aa).

An N-terminal signal peptide occupies residues methionine 1 to alanine 22. 2 PpiC domains span residues alanine 173–aspartate 274 and threonine 283–aspartate 383.

It localises to the periplasm. The catalysed reaction is [protein]-peptidylproline (omega=180) = [protein]-peptidylproline (omega=0). In terms of biological role, chaperone involved in the correct folding and assembly of outer membrane proteins. Recognizes specific patterns of aromatic residues and the orientation of their side chains, which are found more frequently in integral outer membrane proteins. May act in both early periplasmic and late outer membrane-associated steps of protein maturation. This is Chaperone SurA from Pseudoalteromonas translucida (strain TAC 125).